A 294-amino-acid polypeptide reads, in one-letter code: Glycine--tRNA ligase alpha subunit (294 aa).

It belongs to the class-II aminoacyl-tRNA synthetase family. In terms of assembly, tetramer of two alpha and two beta subunits.

The protein resides in the cytoplasm. The enzyme catalyses tRNA(Gly) + glycine + ATP = glycyl-tRNA(Gly) + AMP + diphosphate. The sequence is that of Glycine--tRNA ligase alpha subunit from Oleidesulfovibrio alaskensis (strain ATCC BAA-1058 / DSM 17464 / G20) (Desulfovibrio alaskensis).